The following is a 319-amino-acid chain: Protein quaking-B (319 aa).

The KH domain occupies 87–153; sequence YVPVKEYPDF…WEHLNEDLHV (67 aa). Positions 276-279 match the SH3-binding motif; it reads PQTP.

This sequence belongs to the quaking family. In terms of assembly, homodimer; does not require RNA to homodimerize.

It localises to the cytoplasm. It is found in the nucleus. In terms of biological role, RNA reader protein, which recognizes and binds specific RNAs, thereby regulating RNA metabolic processes, such as pre-mRNA splicing, circular RNA (circRNA) formation, mRNA export, mRNA stability and/or translation. Involved in various cellular processes, such as mRNA storage into stress granules, apoptosis, interferon response, glial cell fate and development. Binds to the 5'-NACUAAY-N(1,20)-UAAY-3' RNA core sequence. Acts as a mRNA modification reader that specifically recognizes and binds mRNA transcripts modified by internal N(7)-methylguanine (m7G). Promotes the formation of circular RNAs (circRNAs): acts by binding to sites flanking circRNA-forming exons. CircRNAs are produced by back-splicing circularization of pre-mRNAs. Required to protect and promote stability of mRNAs which promotes oligodendrocyte differentiation. Acts as an important regulator of muscle development: required during early skeletal myofibril formation by regulating the accumulation of the muscle-specific tropomyosin-3 (tpm3) transcripts. The polypeptide is Protein quaking-B (qki2) (Danio rerio (Zebrafish)).